Reading from the N-terminus, the 445-residue chain is Glutamate--tRNA ligase 2 (445 aa).

Residues 10–20 (PSPTGRLHVGN) carry the 'HIGH' region motif. The short motif at 241–245 (ALSKR) is the 'KMSKS' region element. Position 244 (Lys244) interacts with ATP.

Belongs to the class-I aminoacyl-tRNA synthetase family. Glutamate--tRNA ligase type 1 subfamily. In terms of assembly, monomer.

The protein localises to the cytoplasm. It catalyses the reaction tRNA(Glu) + L-glutamate + ATP = L-glutamyl-tRNA(Glu) + AMP + diphosphate. Catalyzes the attachment of glutamate to tRNA(Glu) in a two-step reaction: glutamate is first activated by ATP to form Glu-AMP and then transferred to the acceptor end of tRNA(Glu). The sequence is that of Glutamate--tRNA ligase 2 from Hyphomonas neptunium (strain ATCC 15444).